The following is an 858-amino-acid chain: Elongation factor 2 (858 aa).

The tr-type G domain maps to 17 to 362; the sequence is ANIRNMSVIA…MITIHLPSPV (346 aa). Position 26 to 33 (26 to 33) interacts with GTP; sequence AHVDHGKS. The residue at position 54 (threonine 54) is a Phosphothreonine. Phosphothreonine; by EEF2K is present on threonine 57. Residue threonine 59 is modified to Phosphothreonine. The residue at position 152 (lysine 152) is an N6-succinyllysine. Residues 158-161 and 216-218 each bind GTP; these read NKMD and SGL. Lysine 235 is subject to N6-acetyllysine. Lysine 239 carries the N6-acetyllysine; alternate modification. Residue lysine 239 forms a Glycyl lysine isopeptide (Lys-Gly) (interchain with G-Cter in SUMO1); alternate linkage. A Phosphotyrosine; by CSK modification is found at tyrosine 265. Lysine 272 is modified (N6-acetyllysine; alternate). N6-succinyllysine; alternate is present on lysine 272. Lysine 275 bears the N6-acetyllysine mark. Residue lysine 322 forms a Glycyl lysine isopeptide (Lys-Gly) (interchain with G-Cter in SUMO) linkage. Serine 325 carries the post-translational modification Phosphoserine. Residue tyrosine 373 is modified to Phosphotyrosine; by CSK. Threonine 435 bears the Phosphothreonine mark. 2 positions are modified to N6-acetyllysine: lysine 439 and lysine 445. Residue serine 502 is modified to Phosphoserine. At lysine 525 the chain carries N6,N6,N6-trimethyllysine; by EEF2KMT. Lysine 529 participates in a covalent cross-link: Glycyl lysine isopeptide (Lys-Gly) (interchain with G-Cter in SUMO). Lysine 572 is modified (N6-succinyllysine). Phosphoserine; by CDK2 is present on serine 595. An N6-acetyllysine modification is found at lysine 619. Histidine 715 carries the post-translational modification Diphthamide.

This sequence belongs to the TRAFAC class translation factor GTPase superfamily. Classic translation factor GTPase family. EF-G/EF-2 subfamily. As to quaternary structure, binds to 80S ribosomes. Actively translating ribosomes show mutually exclusive binding of eIF5a (EIF5A or EIF5A2) and EEF2/eEF2. Interacts with SERBP1; interaction sequesters EEF2/eEF2 at the A-site of the ribosome, thereby blocking the interaction sites of the mRNA-tRNA complex, promoting ribosome stabilization and hibernation. Interacts with HABP4; interaction takes place at the A-site of hibernating ribosomes and promotes ribosome stabilization. Component of the mRNA surveillance SURF complex, at least composed of ERF1, ERF3 (ERF3A or ERF3B), EEF2, UPF1/RENT1, SMG1, SMG8 and SMG9. Interacts with RBPMS2. Post-translationally, diphthamide is 2-[3-carboxyamido-3-(trimethyl-ammonio)propyl]histidine. In terms of processing, phosphorylation by EF-2 kinase completely inactivates EF-2; it requires prior phosphorylation by CDK2 at Ser-595 during mitotic prometaphase. Phosphorylation by CSK promotes SUMOylation, proteolytic cleavage, and nuclear translocation if the C-terminal fragment. Proteolytically processed at two sites following phosphorylation by CSK. Post-translationally, SUMOylated following phosphorylation by CSK, promotes proteolytic cleavage. In terms of processing, ISGylated.

It is found in the cytoplasm. It localises to the nucleus. It catalyses the reaction GTP + H2O = GDP + phosphate + H(+). In terms of biological role, catalyzes the GTP-dependent ribosomal translocation step during translation elongation. During this step, the ribosome changes from the pre-translocational (PRE) to the post-translocational (POST) state as the newly formed A-site-bound peptidyl-tRNA and P-site-bound deacylated tRNA move to the P and E sites, respectively. Catalyzes the coordinated movement of the two tRNA molecules, the mRNA and conformational changes in the ribosome. The polypeptide is Elongation factor 2 (Eef2) (Rattus norvegicus (Rat)).